The sequence spans 76 residues: Exodeoxyribonuclease 7 small subunit (76 aa).

It belongs to the XseB family. In terms of assembly, heterooligomer composed of large and small subunits.

The protein localises to the cytoplasm. It catalyses the reaction Exonucleolytic cleavage in either 5'- to 3'- or 3'- to 5'-direction to yield nucleoside 5'-phosphates.. In terms of biological role, bidirectionally degrades single-stranded DNA into large acid-insoluble oligonucleotides, which are then degraded further into small acid-soluble oligonucleotides. The protein is Exodeoxyribonuclease 7 small subunit of Bacillus cereus (strain ATCC 14579 / DSM 31 / CCUG 7414 / JCM 2152 / NBRC 15305 / NCIMB 9373 / NCTC 2599 / NRRL B-3711).